The sequence spans 1388 residues: Rho-associated protein kinase 2 (1388 aa).

The interval 1–24 (MSRPPPTGKMPGAPEAVSGDGAGA) is disordered. The 263-residue stretch at 92 to 354 (YDVVKVIGRG…VEEIKQHPFF (263 aa)) folds into the Protein kinase domain. ATP-binding positions include 98 to 106 (IGRGAFGEV) and Lys-121. The Proton acceptor role is filled by Asp-214. One can recognise an AGC-kinase C-terminal domain in the interval 357 to 425 (DQWNWDNIRE…YRENLLLSDS (69 aa)). The interval 363-784 (NIRETAAPVV…INELLKQKDV (422 aa)) is interaction with PPP1R12A. The interval 373 to 420 (PELSSDIDSSNFDDIEDDKGDVETFPIPKAFVGNQLPFIGFTYYRENL) is interaction with NPM1. Thr-414 is modified (phosphothreonine; by ROCK2). The REM-1 domain occupies 497–573 (ALRQLEREKA…LDETNALLRT (77 aa)). Basic and acidic residues predominate over residues 512-530 (NAEYQRKADHEADKKRNLE). The segment at 512-532 (NAEYQRKADHEADKKRNLEND) is disordered. Position 722 is a phosphotyrosine; by SRC (Tyr-722). The RhoBD domain occupies 979–1047 (TSDVANLANE…LAEIMNRKEP (69 aa)). The interval 979–1047 (TSDVANLANE…LAEIMNRKEP (69 aa)) is RHOA binding. A coiled-coil region spans residues 1054–1126 (TDMRRKEKEN…EQLRSQLQAL (73 aa)). Residue Ser-1137 is modified to Phosphoserine. In terms of domain architecture, PH spans 1150 to 1349 (ESRLEGWLSL…WVSRLVKKIP (200 aa)). The residue at position 1212 (Thr-1212) is a Phosphothreonine. The segment at 1260-1315 (GHEFIPTLYHFPTNCEACMKPLWHMFKPPPALECRRCHIKCHKDHMDKKEEIIAPC) adopts a Phorbol-ester/DAG-type zinc-finger fold. A disordered region spans residues 1345 to 1388 (VKKIPKKPPAPDPFARSSPRTSMKIQQNQSIRRPSRQLAANKPS). A phosphoserine mark is found at Ser-1362 and Ser-1374. The segment covering 1362–1376 (SPRTSMKIQQNQSIR) has biased composition (polar residues).

Belongs to the protein kinase superfamily. AGC Ser/Thr protein kinase family. In terms of assembly, homodimer. Interacts with IRS1. Interacts with RAF1. Interacts with RHOA (activated by GTP), RHOB and RHOC. Interacts with PPP1R12A. Interacts with EP300. Interacts with CHORDC1. Interacts with BRCA2. Interacts with NPM1; this interaction enhances ROCK2 activity. Interacts with SORL1. Interacts with PJVK. Requires Mg(2+) as cofactor. Autophosphorylated. Phosphorylation at Tyr-722 reduces its binding to RHOA and is crucial for focal adhesion dynamics. Dephosphorylation by PTPN11 stimulates its RHOA binding activity. In terms of processing, cleaved by granzyme B during apoptosis. This leads to constitutive activation of the kinase and membrane blebbing.

It is found in the cytoplasm. Its subcellular location is the cell membrane. The protein resides in the nucleus. The protein localises to the cytoskeleton. It localises to the microtubule organizing center. It is found in the centrosome. The enzyme catalyses L-seryl-[protein] + ATP = O-phospho-L-seryl-[protein] + ADP + H(+). It catalyses the reaction L-threonyl-[protein] + ATP = O-phospho-L-threonyl-[protein] + ADP + H(+). With respect to regulation, activated by RHOA binding. Inhibited by Y-27632. In terms of biological role, protein kinase which is a key regulator of actin cytoskeleton and cell polarity. Involved in regulation of smooth muscle contraction, actin cytoskeleton organization, stress fiber and focal adhesion formation, neurite retraction, cell adhesion and motility via phosphorylation of ADD1, BRCA2, CNN1, EZR, DPYSL2, EP300, MSN, MYL9/MLC2, NPM1, RDX, PPP1R12A and VIM. Phosphorylates SORL1 and IRF4. Acts as a negative regulator of VEGF-induced angiogenic endothelial cell activation. Positively regulates the activation of p42/MAPK1-p44/MAPK3 and of p90RSK/RPS6KA1 during myogenic differentiation. Plays an important role in the timely initiation of centrosome duplication. Inhibits keratinocyte terminal differentiation. May regulate closure of the eyelids and ventral body wall through organization of actomyosin bundles. Plays a critical role in the regulation of spine and synaptic properties in the hippocampus. Plays an important role in generating the circadian rhythm of the aortic myofilament Ca(2+) sensitivity and vascular contractility by modulating the myosin light chain phosphorylation. This chain is Rho-associated protein kinase 2 (ROCK2), found in Sus scrofa (Pig).